The primary structure comprises 475 residues: tRNA modification GTPase MnmE (475 aa).

(6S)-5-formyl-5,6,7,8-tetrahydrofolate contacts are provided by Arg24, Glu81, and Lys124. A TrmE-type G domain is found at Gly220–Gly397. A K(+)-binding site is contributed by Asn230. Residues Asn230 to Ser235, Thr249 to Thr255, Asp274 to Gly277, and Ser378 to Arg380 contribute to the GTP site. Ser234 contributes to the Mg(2+) binding site. Residues Thr249, Ile251, and Thr254 each contribute to the K(+) site. Thr255 provides a ligand contact to Mg(2+). Lys475 contributes to the (6S)-5-formyl-5,6,7,8-tetrahydrofolate binding site.

Belongs to the TRAFAC class TrmE-Era-EngA-EngB-Septin-like GTPase superfamily. TrmE GTPase family. In terms of assembly, homodimer. Heterotetramer of two MnmE and two MnmG subunits. The cofactor is K(+).

It localises to the cytoplasm. In terms of biological role, exhibits a very high intrinsic GTPase hydrolysis rate. Involved in the addition of a carboxymethylaminomethyl (cmnm) group at the wobble position (U34) of certain tRNAs, forming tRNA-cmnm(5)s(2)U34. This chain is tRNA modification GTPase MnmE, found in Cupriavidus necator (strain ATCC 17699 / DSM 428 / KCTC 22496 / NCIMB 10442 / H16 / Stanier 337) (Ralstonia eutropha).